The sequence spans 372 residues: Cytochrome b (372 aa).

4 helical membrane-spanning segments follow: residues 25 to 45 (FGSM…FLAI), 69 to 90 (WIMQ…YIHI), 105 to 125 (WVSG…GYVL), and 170 to 190 (FFAL…IHVM). Residues histidine 75 and histidine 89 each contribute to the heme b site. Histidine 174 and histidine 188 together coordinate heme b. Residue histidine 193 participates in a ubiquinone binding. 4 helical membrane passes run 218–238 (YKDT…TSFF), 280–300 (LGGT…PFTH), 312–332 (MAQV…WAAT), and 339–358 (FTTI…IINP).

This sequence belongs to the cytochrome b family. As to quaternary structure, the cytochrome bc1 complex contains 3 respiratory subunits (MT-CYB, CYC1 and UQCRFS1), 2 core proteins (UQCRC1 and UQCRC2) and probably 6 low-molecular weight proteins. Heme b is required as a cofactor.

The protein resides in the mitochondrion inner membrane. In terms of biological role, component of the ubiquinol-cytochrome c reductase complex (complex III or cytochrome b-c1 complex) that is part of the mitochondrial respiratory chain. The b-c1 complex mediates electron transfer from ubiquinol to cytochrome c. Contributes to the generation of a proton gradient across the mitochondrial membrane that is then used for ATP synthesis. In Heterodon simus (Southern hognose snake), this protein is Cytochrome b (MT-CYB).